A 510-amino-acid chain; its full sequence is 2,3-bisphosphoglycerate-independent phosphoglycerate mutase (510 aa).

Residues Asp-13 and Ser-63 each coordinate Mn(2+). The active-site Phosphoserine intermediate is the Ser-63. Substrate is bound by residues His-124, 154–155 (RD), Arg-186, Arg-192, 262–265 (RADR), and Lys-334. Residues Asp-401, His-405, Asp-442, His-443, and His-461 each contribute to the Mn(2+) site.

Belongs to the BPG-independent phosphoglycerate mutase family. As to quaternary structure, monomer. The cofactor is Mn(2+).

It carries out the reaction (2R)-2-phosphoglycerate = (2R)-3-phosphoglycerate. The protein operates within carbohydrate degradation; glycolysis; pyruvate from D-glyceraldehyde 3-phosphate: step 3/5. Catalyzes the interconversion of 2-phosphoglycerate and 3-phosphoglycerate. The protein is 2,3-bisphosphoglycerate-independent phosphoglycerate mutase of Vibrio atlanticus (strain LGP32) (Vibrio splendidus (strain Mel32)).